The sequence spans 176 residues: Adenine phosphoribosyltransferase (176 aa).

The protein belongs to the purine/pyrimidine phosphoribosyltransferase family. Homodimer.

Its subcellular location is the cytoplasm. The enzyme catalyses AMP + diphosphate = 5-phospho-alpha-D-ribose 1-diphosphate + adenine. It functions in the pathway purine metabolism; AMP biosynthesis via salvage pathway; AMP from adenine: step 1/1. Functionally, catalyzes a salvage reaction resulting in the formation of AMP, that is energically less costly than de novo synthesis. This chain is Adenine phosphoribosyltransferase, found in Borreliella burgdorferi (strain ATCC 35210 / DSM 4680 / CIP 102532 / B31) (Borrelia burgdorferi).